Consider the following 211-residue polypeptide: Protein-L-isoaspartate O-methyltransferase (211 aa).

Ser60 is a catalytic residue.

It belongs to the methyltransferase superfamily. L-isoaspartyl/D-aspartyl protein methyltransferase family.

The protein resides in the cytoplasm. It carries out the reaction [protein]-L-isoaspartate + S-adenosyl-L-methionine = [protein]-L-isoaspartate alpha-methyl ester + S-adenosyl-L-homocysteine. Functionally, catalyzes the methyl esterification of L-isoaspartyl residues in peptides and proteins that result from spontaneous decomposition of normal L-aspartyl and L-asparaginyl residues. It plays a role in the repair and/or degradation of damaged proteins. This Ectopseudomonas mendocina (strain ymp) (Pseudomonas mendocina) protein is Protein-L-isoaspartate O-methyltransferase.